Consider the following 347-residue polypeptide: Methylthioribose-1-phosphate isomerase (347 aa).

Residues 46–48 (RGA), R89, and Q196 each bind substrate. Residue D237 is the Proton donor of the active site. Position 247-248 (247-248 (NK)) interacts with substrate.

It belongs to the eIF-2B alpha/beta/delta subunits family. MtnA subfamily.

The catalysed reaction is 5-(methylsulfanyl)-alpha-D-ribose 1-phosphate = 5-(methylsulfanyl)-D-ribulose 1-phosphate. It participates in amino-acid biosynthesis; L-methionine biosynthesis via salvage pathway; L-methionine from S-methyl-5-thio-alpha-D-ribose 1-phosphate: step 1/6. Catalyzes the interconversion of methylthioribose-1-phosphate (MTR-1-P) into methylthioribulose-1-phosphate (MTRu-1-P). This is Methylthioribose-1-phosphate isomerase from Chloroflexus aurantiacus (strain ATCC 29366 / DSM 635 / J-10-fl).